Reading from the N-terminus, the 521-residue chain is Solute carrier family 35 member F4 (521 aa).

Transmembrane regions (helical) follow at residues 160–180, 192–212, 248–266, 277–297, 301–321, 330–350, 365–385, 395–417, 419–441, and 450–470; these read MVLK…SWVG, FYCP…FFPV, FLKR…NYLY, DVSA…WIVL, FMGV…MMAY, IIGV…KVLF, FVST…VILY, FAAL…NILV, VGVV…PGNA, and VIFN…FLLM. The EamA domain maps to 261 to 321; it reads LTNYLYLLAL…AITGIVMMAY (61 aa).

The protein belongs to the SLC35F solute transporter family.

Its subcellular location is the membrane. Its function is as follows. Putative solute transporter. The protein is Solute carrier family 35 member F4 (SLC35F4) of Homo sapiens (Human).